The following is a 146-amino-acid chain: Anti-sigma F factor (146 aa).

The protein belongs to the anti-sigma-factor family.

The enzyme catalyses L-seryl-[protein] + ATP = O-phospho-L-seryl-[protein] + ADP + H(+). It carries out the reaction L-threonyl-[protein] + ATP = O-phospho-L-threonyl-[protein] + ADP + H(+). Functionally, binds to sigma F and blocks its ability to form an RNA polymerase holoenzyme (E-sigma F). Phosphorylates SpoIIAA on a serine residue. This phosphorylation may enable SpoIIAA to act as an anti-anti-sigma factor that counteracts SpoIIAB and thus releases sigma F from inhibition. This chain is Anti-sigma F factor, found in Geobacillus sp. (strain WCH70).